We begin with the raw amino-acid sequence, 196 residues long: DnaA initiator-associating protein DiaA (196 aa).

In terms of domain architecture, SIS spans 34 to 196 (LVQSLLNGNK…DNTLFPHQDD (163 aa)).

The protein belongs to the SIS family. DiaA subfamily. Homotetramer; dimer of dimers.

Required for the timely initiation of chromosomal replication via direct interactions with the DnaA initiator protein. The chain is DnaA initiator-associating protein DiaA from Cronobacter sakazakii (strain ATCC BAA-894) (Enterobacter sakazakii).